The sequence spans 782 residues: Coiled-coil alpha-helical rod protein 1 (782 aa).

2 stretches are compositionally biased toward basic and acidic residues: residues 62–74 and 208–218; these read ERDVSSDRQEPGR and ETRRAGEAKEL. Disordered stretches follow at residues 62-82 and 177-218; these read ERDVSSDRQEPGRRGRSWGLE and EQLS…AKEL. Coiled-coil stretches lie at residues 111–303, 344–437, and 498–691; these read LRET…SLTH, LMVQ…NAVS, and VTDV…QQEG.

In terms of tissue distribution, found in all tissues tested, abundantly expressed in heart, liver, skeletal muscle, kidney and pancreas, and to a lesser extent in lung and placenta. Overexpressed in keratinocytes of psoriatic lesions.

It localises to the cytoplasm. The protein resides in the nucleus. Its function is as follows. May be a regulator of keratinocyte proliferation or differentiation. The chain is Coiled-coil alpha-helical rod protein 1 (CCHCR1) from Homo sapiens (Human).